The chain runs to 175 residues: Endothelin-2 (175 aa).

Residues 1-21 (MVSAWCSIALALLLALHEGKG) form the signal peptide. The propeptide occupies 22–43 (QAAATLEQPASAPKGRGPHLRF). 2 disulfides stabilise this stretch: Cys-46-Cys-60 and Cys-48-Cys-56. Residues 67-175 (VNTAGQTAPY…IPAYSRWRKR (109 aa)) constitute a propeptide that is removed on maturation. An endothelin-like region spans residues 93–108 (CECSTAGDSACATFCH).

It belongs to the endothelin/sarafotoxin family.

It localises to the secreted. In terms of biological role, vasoconstrictor. The sequence is that of Endothelin-2 (Edn2) from Mus musculus (Mouse).